The primary structure comprises 644 residues: Anti-sigma-I factor RsgI3 (644 aa).

Residues 1 to 56 lie on the Cytoplasmic side of the membrane; sequence MDNIGVIIKIEGNEAIVMTDDCSFKKVPIKDGMHPGQKILVPNNEVIQKENKSIKR. A RsgI N-terminal anti-sigma domain is found at 3–50; that stretch reads NIGVIIKIEGNEAIVMTDDCSFKKVPIKDGMHPGQKILVPNNEVIQKE. Residues 57-77 traverse the membrane as a helical segment; it reads ISAVATGIAAVFLMVLSLIWI. The Extracellular portion of the chain corresponds to 78-644; the sequence is NKPGRPDGIY…VVPSKNLFAD (567 aa). Over residues 302-328 the composition is skewed to polar residues; it reads PTNTPSISTKPSATPAENPTPKLTQKP. Residues 302–359 are disordered; sequence PTNTPSISTKPSATPAENPTPKLTQKPTPVPAKTGERTSTTPTPTPAPTVRNGTGSGL. PA14 domains follow at residues 354 to 491 and 502 to 640; these read GTGS…PSSQ and KDVN…PSKN.

As to quaternary structure, interacts (via RsgI N-terminal anti-sigma domain) with SigI3.

It localises to the cell membrane. In terms of biological role, anti-sigma factor for SigI3. Negatively regulates SigI3 activity through direct interaction. Binding of the polysaccharide substrate to the extracellular C-terminal sensing domain of RsgI3 may induce a conformational change in its N-terminal cytoplasmic region, leading to the release and activation of SigI3. In Acetivibrio thermocellus (strain ATCC 27405 / DSM 1237 / JCM 9322 / NBRC 103400 / NCIMB 10682 / NRRL B-4536 / VPI 7372) (Clostridium thermocellum), this protein is Anti-sigma-I factor RsgI3.